The following is a 727-amino-acid chain: MSVLPDRQVINQLISGHYGDPFSILGMHETSQGLQICALLPDAREVWLVETENGRRIAQLTLEDPRGFFIAQLTRRKKSFRYQFAVTWQESPQIIEDPYRFGPLLQDIDSWLLAEGTHLRPYERLGAHLMSLDGVSGVSFAVWAPNAQRVSVVGDFNFWDGRRHPMRLRRENGIWELFLPGIEAGQLYKFEIIDCHGQVRLKADPYAFEAQMRPETASLISPLPDVVKSSAARQKANDLCSPVSIYEVHLGSWRRHTDNNFWLSYRELADQLVEYVKYMGFTHVELLPINEHPFDGSWGYQPLGLYAPTRRYGTPEDFKAFVAKFHQAGINVILDWVPGHFPSDEHGLSTFDGTALYEYADPREGYHQDWNTLIYNYGRNEVRNYLAGNAFYWMERFGIDALRIDAVASMIYRDYSRAEGQWVPNYYGGRENLEAIAFLRYTNKTIGVERPGSVTMAEESTDFPGVTLPPDIGGLGFNYKWNMGWMHDTLNYMQCDPVHRKYHHNLMTFGMLYAYTENFILPLSHDEVVHGKRSILDRMPGDAWQKFANLRAYYAFMWAHPGKKLLFMGCEFAQGREWNFETSLDWHLLDDENGWHSGVQRLVRDLNHCYRQYAPLYEWDYQPAGFEWLVVDDHENSVFAFLRRDAEGHELIAISNFTPVPRYHYRVGIPQGGHYREVLNSDSAFYCGSNLGNQGGIDSHHVRSHNHEHSLLLTLPPLATIYLLREN.

The Nucleophile role is filled by aspartate 405. Glutamate 458 (proton donor) is an active-site residue.

The protein belongs to the glycosyl hydrolase 13 family. GlgB subfamily. As to quaternary structure, monomer.

It carries out the reaction Transfers a segment of a (1-&gt;4)-alpha-D-glucan chain to a primary hydroxy group in a similar glucan chain.. It participates in glycan biosynthesis; glycogen biosynthesis. Its function is as follows. Catalyzes the formation of the alpha-1,6-glucosidic linkages in glycogen by scission of a 1,4-alpha-linked oligosaccharide from growing alpha-1,4-glucan chains and the subsequent attachment of the oligosaccharide to the alpha-1,6 position. The sequence is that of 1,4-alpha-glucan branching enzyme GlgB from Yersinia pseudotuberculosis serotype I (strain IP32953).